The chain runs to 284 residues: Acetyl-coenzyme A carboxylase carboxyl transferase subunit beta (284 aa).

The region spanning 27–284 (LMTKCPSCKY…ELHDGGVRHV (258 aa)) is the CoA carboxyltransferase N-terminal domain. The Zn(2+) site is built by Cys-31, Cys-34, Cys-50, and Cys-52. Residues 31–52 (CPSCKYMHYTKQLNENHKVCDC) form a C4-type zinc finger.

It belongs to the AccD/PCCB family. Acetyl-CoA carboxylase is a heterohexamer composed of biotin carboxyl carrier protein (AccB), biotin carboxylase (AccC) and two subunits each of ACCase subunit alpha (AccA) and ACCase subunit beta (AccD). It depends on Zn(2+) as a cofactor.

The protein localises to the cytoplasm. The enzyme catalyses N(6)-carboxybiotinyl-L-lysyl-[protein] + acetyl-CoA = N(6)-biotinyl-L-lysyl-[protein] + malonyl-CoA. The protein operates within lipid metabolism; malonyl-CoA biosynthesis; malonyl-CoA from acetyl-CoA: step 1/1. Functionally, component of the acetyl coenzyme A carboxylase (ACC) complex. Biotin carboxylase (BC) catalyzes the carboxylation of biotin on its carrier protein (BCCP) and then the CO(2) group is transferred by the transcarboxylase to acetyl-CoA to form malonyl-CoA. The protein is Acetyl-coenzyme A carboxylase carboxyl transferase subunit beta of Exiguobacterium sp. (strain ATCC BAA-1283 / AT1b).